The primary structure comprises 187 residues: Cell division protein SepF (187 aa).

The interval 13–74 (GLAEDDRYAE…PAPATTAQVT (62 aa)) is disordered. A compositionally biased stretch (basic and acidic residues) spans 16 to 65 (EDDRYAEDTEPETTRPRVEAAREVRVESRHEARPEVRHEPRPEVSVERRP).

This sequence belongs to the SepF family. As to quaternary structure, homodimer. Interacts with FtsZ.

The protein resides in the cytoplasm. Its function is as follows. Cell division protein that is part of the divisome complex and is recruited early to the Z-ring. Probably stimulates Z-ring formation, perhaps through the cross-linking of FtsZ protofilaments. Its function overlaps with FtsA. This chain is Cell division protein SepF, found in Kineococcus radiotolerans (strain ATCC BAA-149 / DSM 14245 / SRS30216).